The chain runs to 149 residues: Ribonuclease pancreatic (149 aa).

Positions 1-25 are cleaved as a signal peptide; sequence MGLEKSFILFSLLVLVLGWVQPSLS. A compositionally biased stretch (basic and acidic residues) spans 30 to 40; it reads ADKFKRQHMDT. The disordered stretch occupies residues 30–49; sequence ADKFKRQHMDTEGSSNSSPT. Substrate contacts are provided by lysine 32 and arginine 35. Histidine 37 serves as the catalytic Proton acceptor. Cystine bridges form between cysteine 51-cysteine 109, cysteine 65-cysteine 120, cysteine 83-cysteine 135, and cysteine 90-cysteine 97. Asparagine 62 carries an N-linked (GlcNAc...) asparagine glycan. 66–70 contacts substrate; it reads KPVNT. Asparagine 87 carries N-linked (GlcNAc...) asparagine glycosylation. Residues lysine 91 and arginine 110 each contribute to the substrate site. Histidine 144 functions as the Proton donor in the catalytic mechanism.

It belongs to the pancreatic ribonuclease family. Monomer. Interacts with and forms tight 1:1 complexes with RNH1. Dimerization of two such complexes may occur. Interaction with RNH1 inhibits this protein. Pancreas.

Its subcellular location is the secreted. It catalyses the reaction an [RNA] containing cytidine + H2O = an [RNA]-3'-cytidine-3'-phosphate + a 5'-hydroxy-ribonucleotide-3'-[RNA].. It carries out the reaction an [RNA] containing uridine + H2O = an [RNA]-3'-uridine-3'-phosphate + a 5'-hydroxy-ribonucleotide-3'-[RNA].. Endonuclease that catalyzes the cleavage of RNA on the 3' side of pyrimidine nucleotides. Acts on single-stranded and double-stranded RNA. The protein is Ribonuclease pancreatic (RNASE1) of Niviventer cremoriventer (Dark-tailed tree rat).